Consider the following 657-residue polypeptide: MAKETFYITTPIYYPSGNLHIGHAYSTVAGDVIARYKRMQGYDVRYLTGTDEHGQKIQEKAQKAGKTEIEYLDEMIAGIKQLWAKLEISNDDFIRTTEERHKHVVEQVFERLLKQGDIYLGEYEGWYSVPDETYYTESQLVDPQYENGKIIGGKSPDSGHEVELVKEESYFFNISKYTDRLLEFYDQNPDFIQPPSRKNEMINNFIKPGLADLAVSRTSFNWGVHVPSNPKHVVYVWIDALVNYISALGYLSDDESLFNKYWPADIHLMAKEIVRFHSIIWPILLMALDLPLPKKVFAHGWILMKDGKMSKSKGNVVDPNILIDRYGLDATRYYLMRELPFGSDGVFTPEAFVERTNFDLANDLGNLVNRTISMVNKYFDGELPAYQGPLHELDEEMEAMALETVKSYTESMESLQFSVALSTVWKFISRTNKYIDETTPWVLAKDDSQKDMLGNVMAHLVENIRYAAVLLRPFLTHAPKEIFEQLNINNPQFMEFSSLEQYGVLNESIMVTGQPKPIFPRLDSEAEIAYIKESMQPPATKEEKEEIPSKPQIDIKDFDKVEIKAATIIDAEHVKKSDKLLKIQVDLDSEQRQIVSGIAKFYTPDDIIGKKVAVVTNLKPAKLMGQKSEGMILSAEKDGVLTLVSLPSAIPNGAVIK.

The 'HIGH' region signature appears at 13 to 23 (YYPSGNLHIGH). Positions 308-312 (KMSKS) match the 'KMSKS' region motif. An ATP-binding site is contributed by K311. Residues 557 to 657 (DFDKVEIKAA…SAIPNGAVIK (101 aa)) form the tRNA-binding domain.

This sequence belongs to the class-I aminoacyl-tRNA synthetase family. MetG type 2B subfamily. In terms of assembly, homodimer.

It localises to the cytoplasm. It carries out the reaction tRNA(Met) + L-methionine + ATP = L-methionyl-tRNA(Met) + AMP + diphosphate. In terms of biological role, is required not only for elongation of protein synthesis but also for the initiation of all mRNA translation through initiator tRNA(fMet) aminoacylation. The polypeptide is Methionine--tRNA ligase (Staphylococcus aureus (strain COL)).